A 2266-amino-acid chain; its full sequence is Protein ELYS (2266 aa).

The tract at residues 1–494 is seven-bladed beta propeller repeats; the sequence is MRDLRAQVTS…SGVVHLTCTG (494 aa). The segment at 1–981 is necessary for cytoplasmic localization; that stretch reads MRDLRAQVTS…QTLKINVMND (981 aa). Ser-509, Ser-528, Ser-1080, Ser-1138, Ser-1142, Ser-1150, Ser-1153, Ser-1155, and Ser-1160 each carry phosphoserine. Positions 591–1092 are important for nuclear localization; the sequence is VVLTKEEFDR…IEEPSPIVYS (502 aa). Residues 1019–2266 form a disordered region; that stretch reads YHLSTSSVFR…PKQILRRKML (1248 aa). The necessary for nuclear localization stretch occupies residues 1149 to 2266; sequence RSLPSSSQLK…PKQILRRKML (1118 aa). Thr-1175 carries the phosphothreonine modification. 5 positions are modified to phosphoserine: Ser-1214, Ser-1218, Ser-1222, Ser-1232, and Ser-1250. Position 1257 is a phosphothreonine (Thr-1257). Ser-1283 and Ser-1297 each carry phosphoserine. Polar residues-rich tracts occupy residues 1305 to 1320 and 1335 to 1353; these read KGNSSVSITSDETTLE and FTASKPKSSSTALTTNVTE. Phosphothreonine is present on Thr-1369. 2 positions are modified to phosphoserine: Ser-1371 and Ser-1513. The interval 1446-1698 is mediates transcriptional activity; the sequence is RANDNKSMAD…MEQSIHETIP (253 aa). At Thr-1517 the chain carries Phosphothreonine. Phosphoserine occurs at positions 1533, 1541, 1729, and 1806. 2 stretches are compositionally biased toward polar residues: residues 1796 to 1808 and 1822 to 1838; these read LSQNQQIPQNSVT and ILENTSSVEQELQITTG. Thr-1808 carries the phosphothreonine modification. The important for nuclear localization and chromatin binding stretch occupies residues 1842–2266; that stretch reads KRLKSSQLLE…PKQILRRKML (425 aa). Phosphoserine is present on residues Ser-1878, Ser-1884, and Ser-1898. Positions 1908 to 1919 are enriched in polar residues; sequence STNLDASENTGN. Basic and acidic residues-rich tracts occupy residues 1920 to 1930 and 1940 to 1952; these read KQDDKSSDKQL and GREVSPSDVREDS. Residues Ser-1944 and Ser-1946 each carry the phosphoserine modification. The a.T hook DNA-binding region spans 1971 to 1983; it reads PRKRGRPRKINPS. The segment covering 1986-2004 has biased composition (basic and acidic residues); sequence VGSKAVKEERSPKKKEAPS. Ser-1996, Ser-2043, Ser-2044, and Ser-2060 each carry phosphoserine. The segment covering 2064–2084 has biased composition (basic and acidic residues); sequence VSEERTDEMTHKETNEQEERL. Ser-2089, Ser-2120, Ser-2123, and Ser-2154 each carry phosphoserine. Over residues 2169–2179 the composition is skewed to basic and acidic residues; the sequence is NKLEDELKDDA. The span at 2188-2197 shows a compositional bias: basic residues; sequence PKAKRIRTSK. Ser-2212, Ser-2222, and Ser-2226 each carry phosphoserine.

It belongs to the ELYS family. Associates with the Nup107-160 subcomplex of the NPC.

The protein localises to the cytoplasm. It is found in the nucleus. Its subcellular location is the nucleus envelope. The protein resides in the nucleus matrix. It localises to the chromosome. The protein localises to the centromere. It is found in the kinetochore. Its subcellular location is the nucleoplasm. The protein resides in the nuclear pore complex. Its function is as follows. Required for the assembly of a functional nuclear pore complex (NPC) on the surface of chromosomes as nuclei form at the end of mitosis. May initiate NPC assembly by binding to chromatin and recruiting the Nup107-160 subcomplex of the NPC. Also required for the localization of the Nup107-160 subcomplex of the NPC to the kinetochore during mitosis and for the completion of cytokinesis. This is Protein ELYS (AHCTF1) from Homo sapiens (Human).